Here is a 168-residue protein sequence, read N- to C-terminus: Microtubule-associated protein Jupiter (168 aa).

Positions 1–14 are enriched in polar residues; it reads MISNFDCTDNQASS. Residues 1–33 form a disordered region; it reads MISNFDCTDNQASSKVLRPPGGGSSDIFGSEMP. Position 24 is a phosphoserine (S24). A Phosphothreonine modification is found at T35. The span at 76–87 shows a compositional bias: basic and acidic residues; sequence RGQKTVDSHSRL. Disordered stretches follow at residues 76–106 and 124–168; these read RGQKTVDSHSRLFGEPTRPITPGKNHMKSSI and NGHY…GAGK. Phosphothreonine occurs at positions 92 and 96. Residues S105, S133, and S144 each carry the phosphoserine modification. Positions 131–144 are enriched in low complexity; sequence SGSVSSASSSVSSS. Residues 145-155 are compositionally biased toward polar residues; the sequence is TENLKMNSGSR.

The protein belongs to the MAP Jupiter family.

It is found in the nucleus. The protein resides in the cytoplasm. It localises to the cytoskeleton. Its subcellular location is the spindle. Binds to all microtubule populations. The polypeptide is Microtubule-associated protein Jupiter (Drosophila simulans (Fruit fly)).